A 462-amino-acid chain; its full sequence is Argininosuccinate lyase 2 (462 aa).

It belongs to the lyase 1 family. Argininosuccinate lyase subfamily.

The protein localises to the cytoplasm. The catalysed reaction is 2-(N(omega)-L-arginino)succinate = fumarate + L-arginine. It participates in amino-acid biosynthesis; L-arginine biosynthesis; L-arginine from L-ornithine and carbamoyl phosphate: step 3/3. The sequence is that of Argininosuccinate lyase 2 from Shouchella clausii (strain KSM-K16) (Alkalihalobacillus clausii).